Consider the following 162-residue polypeptide: Peptidyl-prolyl cis-trans isomerase (162 aa).

Residues 16–162 (KTAYATIKTN…IESVVFSPSL (147 aa)) form the PPIase cyclophilin-type domain.

Belongs to the cyclophilin-type PPIase family.

It carries out the reaction [protein]-peptidylproline (omega=180) = [protein]-peptidylproline (omega=0). In terms of biological role, PPIases accelerate the folding of proteins. It catalyzes the cis-trans isomerization of proline imidic peptide bonds in oligopeptides. The protein is Peptidyl-prolyl cis-trans isomerase (ppiA) of Helicobacter pylori (strain J99 / ATCC 700824) (Campylobacter pylori J99).